Reading from the N-terminus, the 470-residue chain is Poly(A) polymerase catalytic subunit (470 aa).

Catalysis depends on residues aspartate 192 and aspartate 194.

This sequence belongs to the poxviridae poly(A) polymerase catalytic subunit family. In terms of assembly, heterodimer of a large (catalytic) subunit and a small (regulatory) subunit.

The enzyme catalyses RNA(n) + ATP = RNA(n)-3'-adenine ribonucleotide + diphosphate. Functionally, polymerase that creates the 3'-poly(A) tail of mRNA's. The chain is Poly(A) polymerase catalytic subunit (PAPL) from Oryctolagus cuniculus (Rabbit).